We begin with the raw amino-acid sequence, 478 residues long: Sedoheptulokinase (478 aa).

Belongs to the FGGY kinase family. In terms of tissue distribution, strongly expressed in liver, kidney and pancreas. Expressed at lower levels in placenta and heart. Very weakly expressed in lung and brain.

It is found in the cytoplasm. The enzyme catalyses sedoheptulose + ATP = D-sedoheptulose 7-phosphate + ADP + H(+). Functionally, acts as a modulator of macrophage activation through control of glucose metabolism. In Homo sapiens (Human), this protein is Sedoheptulokinase.